The primary structure comprises 202 residues: Eukaryotic translation initiation factor isoform 4E (202 aa).

The segment at 1-24 is disordered; the sequence is MATEAPPPVDTTEVPPFTAAETAV. Residues 46–51, Lys78, and 96–97 contribute to the mRNA site; these read QGAAWG and WE. An intrachain disulfide couples Cys101 to Cys140. Residues 147–152 and 191–194 each bind mRNA; these read RRSQDK and KRER.

Belongs to the eukaryotic initiation factor 4E family. As to quaternary structure, EIF4F is a multi-subunit complex, the composition of which varies with external and internal environmental conditions. It is composed of at least EIF4A, EIF4E and EIF4G. EIF4E is also known to interact with other partners. In higher plants two isoforms of EIF4F have been identified, named isoform EIF4F and isoform EIF(iso)4F. Isoform EIF4F has subunits p220 and p26, whereas isoform EIF(iso)4F has subunits p82 and p28. In terms of assembly, (Microbial infection) Interacts with viral genome-linked protein (VPg); this interaction is possible in susceptible hosts but impaired in resistant plants. Post-translationally, according to the redox status, the Cys-101-Cys-140 disulfide bridge may have a role in regulating protein function by affecting its ability to bind capped mRNA.

The protein localises to the cytoplasm. Its subcellular location is the nucleus. Its function is as follows. Component of the protein complex eIF4F, which is involved in the recognition of the mRNA cap, ATP-dependent unwinding of 5'-terminal secondary structure and recruitment of mRNA to the ribosome. Recognizes and binds the 7-methylguanosine-containing mRNA cap during an early step in the initiation of protein synthesis and facilitates ribosome binding by inducing the unwinding of the mRNAs secondary structures. Key component of recessive resistance to potyviruses. (Microbial infection) Susceptibility host factor required for viral infection by recruiting viral RNAs to the host ribosomal complex via an interaction with viral genome-linked protein (VPg). This chain is Eukaryotic translation initiation factor isoform 4E, found in Capsicum annuum (Capsicum pepper).